Consider the following 537-residue polypeptide: MVTRRHLLASASLSATLAALGITPEALAASRVKLGNAAPFNFDALIERARAMAGQPYTPPATAPADILAKIDYEAHGKIKFDTAHALFADGPGQFPVTFFHLGTFFRAPVRMHVVDKGEAREIVYDESYFDMPADSPARKLPRNSGFAGFRFQESRLGDQKKLDWKKNDWVAFLGASYFRAIGELYQYGLSARGIALDVAQAGRAEEFPNFTHVWFDTPSNEHADSVTIYALLDGPGITGAYRFVMHRGKGVVMEIDTALFLRRDIDRFGIAPASSMYWFSETAKGTATDWRPEVHDSDGLAMWTGSGERIWRPLNDPPRVMTSAFSDNNPRGFGLLQRDRDFNNYMDGVHYERRPSLWVEPLEGWGEGAVQLVEIPTDDEIHDNIVAMWVPKAPARAGSHYRLRYRLHWLADEPYPTPLARCVATRLGNGGQPGQPRPRGVRKFMVEFKGGPLEKVPFGVKPEAVLTSSRGTFSYVFTEAVPNGVPGHWRAQFDLTVDGKEPVDMRLFLRLDGKPLSETWLYQYHPFQSPVGPVAS.

Residues 1 to 28 constitute a signal peptide (tat-type signal); that stretch reads MVTRRHLLASASLSATLAALGITPEALA.

This sequence belongs to the OpgD/OpgG family. In terms of processing, predicted to be exported by the Tat system. The position of the signal peptide cleavage has not been experimentally proven.

It localises to the periplasm. Its pathway is glycan metabolism; osmoregulated periplasmic glucan (OPG) biosynthesis. In terms of biological role, probably involved in the control of the structural glucose backbone of osmoregulated periplasmic glucans (OPGs). This is Glucans biosynthesis protein D 2 (opgD2) from Ralstonia nicotianae (strain ATCC BAA-1114 / GMI1000) (Ralstonia solanacearum).